Reading from the N-terminus, the 268-residue chain is Undecaprenyl-diphosphatase (268 aa).

The next 7 helical transmembrane spans lie at 41–61, 81–101, 106–126, 146–166, 191–211, 213–233, and 245–265; these read LAYS…LIYF, WLTY…PLYM, YLLL…AVIF, MTLG…LPGI, FVLV…SEGG, VATP…LVTI, and VTLV…TRIL.

The protein belongs to the UppP family.

The protein resides in the cell membrane. The enzyme catalyses di-trans,octa-cis-undecaprenyl diphosphate + H2O = di-trans,octa-cis-undecaprenyl phosphate + phosphate + H(+). Catalyzes the dephosphorylation of undecaprenyl diphosphate (UPP). This is Undecaprenyl-diphosphatase from Pyrobaculum islandicum (strain DSM 4184 / JCM 9189 / GEO3).